The sequence spans 57 residues: Orphan toxin OrtT (57 aa).

Helical transmembrane passes span 6–26 (HMLVFYAVMAAIAFLITWFLS) and 34–54 (FLSAFLVGATWPMSFPVALLF).

It belongs to the GhoT/OrtT toxin family.

The protein resides in the cell inner membrane. In terms of biological role, acts as an orphan toxin which is important for maintaining cell fitness during stress related to the stringent response. Increases the formation of persister cells. Has no known antitoxin. This is Orphan toxin OrtT from Escherichia coli O6:H1 (strain CFT073 / ATCC 700928 / UPEC).